Here is a 920-residue protein sequence, read N- to C-terminus: Translation initiation factor IF-2 (920 aa).

Basic and acidic residues-rich tracts occupy residues 149-175, 186-197, and 255-265; these read EAEM…EKPV, AEKKATADKAAK, and AKPEGADDKKK. Disordered regions lie at residues 149–197 and 245–319; these read EAEM…KAAK and EAKK…KQRQ. The span at 301–311 shows a compositional bias: gly residues; that stretch reads SSGGVGGWRSG. In terms of domain architecture, tr-type G spans 418-585; it reads PRPPVVTVMG…NVLLQAEILE (168 aa). Residues 427–434 are G1; the sequence is GHVDHGKT. GTP is bound at residue 427 to 434; that stretch reads GHVDHGKT. The tract at residues 452-456 is G2; that stretch reads GITQH. The G3 stretch occupies residues 473–476; it reads DTPG. Residues 473–477 and 527–530 contribute to the GTP site; these read DTPGH and NKID. A G4 region spans residues 527–530; that stretch reads NKID. The interval 563–565 is G5; the sequence is SAK.

The protein belongs to the TRAFAC class translation factor GTPase superfamily. Classic translation factor GTPase family. IF-2 subfamily.

The protein localises to the cytoplasm. In terms of biological role, one of the essential components for the initiation of protein synthesis. Protects formylmethionyl-tRNA from spontaneous hydrolysis and promotes its binding to the 30S ribosomal subunits. Also involved in the hydrolysis of GTP during the formation of the 70S ribosomal complex. This chain is Translation initiation factor IF-2, found in Polynucleobacter asymbioticus (strain DSM 18221 / CIP 109841 / QLW-P1DMWA-1) (Polynucleobacter necessarius subsp. asymbioticus).